The sequence spans 394 residues: Elongation factor Tu (394 aa).

One can recognise a tr-type G domain in the interval 10 to 204 (KPHINVGTIG…YLDTYIPEPK (195 aa)). A G1 region spans residues 19-26 (GHVDHGKT). 19 to 26 (GHVDHGKT) is a binding site for GTP. T26 contributes to the Mg(2+) binding site. A G2 region spans residues 60–64 (GITIN). The interval 81–84 (DCPG) is G3. Residues 81–85 (DCPGH) and 136–139 (NKCD) each bind GTP. Residues 136–139 (NKCD) are G4. Residues 174 to 176 (SAL) form a G5 region.

This sequence belongs to the TRAFAC class translation factor GTPase superfamily. Classic translation factor GTPase family. EF-Tu/EF-1A subfamily. As to quaternary structure, monomer.

It is found in the cytoplasm. The catalysed reaction is GTP + H2O = GDP + phosphate + H(+). Its function is as follows. GTP hydrolase that promotes the GTP-dependent binding of aminoacyl-tRNA to the A-site of ribosomes during protein biosynthesis. The protein is Elongation factor Tu of Buchnera aphidicola subsp. Baizongia pistaciae (strain Bp).